Here is a 227-residue protein sequence, read N- to C-terminus: Cytochrome c oxidase subunit 2 (227 aa).

Residues 1–14 (MAYPYELGFQDASS) are Mitochondrial intermembrane-facing. Residues 15–45 (PIMEELLHFHDHTLMIVFLISTLVLYLITIM) traverse the membrane as a helical segment. Over 46-59 (LTTKLTHTSTMDAQ) the chain is Mitochondrial matrix. Residues 60–87 (EIETIWTILPAIILILIALPSLRILYMM) form a helical membrane-spanning segment. Residues 88 to 227 (DEINSPSLTV…DFEIWSSSML (140 aa)) lie on the Mitochondrial intermembrane side of the membrane. Residues histidine 161, cysteine 196, glutamate 198, cysteine 200, histidine 204, and methionine 207 each coordinate Cu cation. Glutamate 198 serves as a coordination point for Mg(2+).

Belongs to the cytochrome c oxidase subunit 2 family. Component of the cytochrome c oxidase (complex IV, CIV), a multisubunit enzyme composed of 14 subunits. The complex is composed of a catalytic core of 3 subunits MT-CO1, MT-CO2 and MT-CO3, encoded in the mitochondrial DNA, and 11 supernumerary subunits COX4I, COX5A, COX5B, COX6A, COX6B, COX6C, COX7A, COX7B, COX7C, COX8 and NDUFA4, which are encoded in the nuclear genome. The complex exists as a monomer or a dimer and forms supercomplexes (SCs) in the inner mitochondrial membrane with NADH-ubiquinone oxidoreductase (complex I, CI) and ubiquinol-cytochrome c oxidoreductase (cytochrome b-c1 complex, complex III, CIII), resulting in different assemblies (supercomplex SCI(1)III(2)IV(1) and megacomplex MCI(2)III(2)IV(2)). Found in a complex with TMEM177, COA6, COX18, COX20, SCO1 and SCO2. Interacts with TMEM177 in a COX20-dependent manner. Interacts with COX20. Interacts with COX16. Cu cation is required as a cofactor.

The protein resides in the mitochondrion inner membrane. The enzyme catalyses 4 Fe(II)-[cytochrome c] + O2 + 8 H(+)(in) = 4 Fe(III)-[cytochrome c] + 2 H2O + 4 H(+)(out). Its function is as follows. Component of the cytochrome c oxidase, the last enzyme in the mitochondrial electron transport chain which drives oxidative phosphorylation. The respiratory chain contains 3 multisubunit complexes succinate dehydrogenase (complex II, CII), ubiquinol-cytochrome c oxidoreductase (cytochrome b-c1 complex, complex III, CIII) and cytochrome c oxidase (complex IV, CIV), that cooperate to transfer electrons derived from NADH and succinate to molecular oxygen, creating an electrochemical gradient over the inner membrane that drives transmembrane transport and the ATP synthase. Cytochrome c oxidase is the component of the respiratory chain that catalyzes the reduction of oxygen to water. Electrons originating from reduced cytochrome c in the intermembrane space (IMS) are transferred via the dinuclear copper A center (CU(A)) of subunit 2 and heme A of subunit 1 to the active site in subunit 1, a binuclear center (BNC) formed by heme A3 and copper B (CU(B)). The BNC reduces molecular oxygen to 2 water molecules using 4 electrons from cytochrome c in the IMS and 4 protons from the mitochondrial matrix. The polypeptide is Cytochrome c oxidase subunit 2 (MT-CO2) (Cavia aperea (Brazilian guinea pig)).